A 233-amino-acid chain; its full sequence is 3-dehydroquinate dehydratase (233 aa).

3-dehydroquinate is bound by residues 34 to 36 (ELR) and R64. H118 serves as the catalytic Proton donor/acceptor. Residue K145 is the Schiff-base intermediate with substrate of the active site. The 3-dehydroquinate site is built by R185, S205, and Q209.

It belongs to the type-I 3-dehydroquinase family. Homodimer.

The catalysed reaction is 3-dehydroquinate = 3-dehydroshikimate + H2O. It functions in the pathway metabolic intermediate biosynthesis; chorismate biosynthesis; chorismate from D-erythrose 4-phosphate and phosphoenolpyruvate: step 3/7. Its function is as follows. Involved in the third step of the chorismate pathway, which leads to the biosynthesis of aromatic amino acids. Catalyzes the cis-dehydration of 3-dehydroquinate (DHQ) and introduces the first double bond of the aromatic ring to yield 3-dehydroshikimate. The sequence is that of 3-dehydroquinate dehydratase from Coxiella burnetii (strain CbuG_Q212) (Coxiella burnetii (strain Q212)).